The following is a 65-amino-acid chain: Large ribosomal subunit protein bL33c (65 aa).

This sequence belongs to the bacterial ribosomal protein bL33 family.

Its subcellular location is the plastid. The protein resides in the chloroplast. This chain is Large ribosomal subunit protein bL33c (rpl33), found in Marchantia polymorpha (Common liverwort).